Reading from the N-terminus, the 205-residue chain is Penta-EF hand domain-containing protein 2 (205 aa).

EF-hand domains lie at 45–75 (EMQS…GGTP), 76–111 (LGIE…INNL), and 119–141 (DRNF…SGFQ). The Ca(2+) site is built by Asp-54, Asn-56, Ser-58, Thr-60, Glu-65, Asp-89, Asn-91, Asn-93, Gln-95, and Glu-100.

This sequence belongs to the Peflin/Sorcin family. As to quaternary structure, in contrast to pefA, does not form homodimers in presence of Ca(2+). May form heterodimers with pefA.

The protein resides in the cytoplasm. The protein localises to the membrane. The protein is Penta-EF hand domain-containing protein 2 (pefB) of Dictyostelium discoideum (Social amoeba).